A 602-amino-acid polypeptide reads, in one-letter code: uncharacterized protein (602 aa).

Positions 51-210 (QYLGTQPRDF…PFVSYQPDAD (160 aa)) constitute a Helicase ATP-binding domain. Positions 430–439 (PHRESAHDPL) are enriched in basic and acidic residues. 2 disordered regions span residues 430–452 (PHRE…TERG) and 518–538 (RAQL…ASVH). Residues 523 to 534 (KGATQPATSGAS) show a composition bias toward polar residues.

This sequence to M.leprae ML1624.

This is an uncharacterized protein from Mycobacterium tuberculosis (strain CDC 1551 / Oshkosh).